The sequence spans 225 residues: UPF0758 protein XC_3944 (225 aa).

In terms of domain architecture, MPN spans 102–224 (ALSDPSSVGR…PVSLAERGWV (123 aa)). Positions 173, 175, and 186 each coordinate Zn(2+). The short motif at 173–186 (HNHPSGNPEPSEAD) is the JAMM motif element.

It belongs to the UPF0758 family.

The polypeptide is UPF0758 protein XC_3944 (Xanthomonas campestris pv. campestris (strain 8004)).